The chain runs to 264 residues: Thymidylate synthase (264 aa).

Position 21 (R21) interacts with dUMP. (6R)-5,10-methylene-5,6,7,8-tetrahydrofolate is bound at residue H51. 126–127 (RR) is a binding site for dUMP. C146 acts as the Nucleophile in catalysis. DUMP-binding positions include 166–169 (RSGD), N177, and 207–209 (HLY). D169 serves as a coordination point for (6R)-5,10-methylene-5,6,7,8-tetrahydrofolate. A263 serves as a coordination point for (6R)-5,10-methylene-5,6,7,8-tetrahydrofolate.

This sequence belongs to the thymidylate synthase family. Bacterial-type ThyA subfamily. In terms of assembly, homodimer.

It is found in the cytoplasm. The enzyme catalyses dUMP + (6R)-5,10-methylene-5,6,7,8-tetrahydrofolate = 7,8-dihydrofolate + dTMP. It functions in the pathway pyrimidine metabolism; dTTP biosynthesis. In terms of biological role, catalyzes the reductive methylation of 2'-deoxyuridine-5'-monophosphate (dUMP) to 2'-deoxythymidine-5'-monophosphate (dTMP) while utilizing 5,10-methylenetetrahydrofolate (mTHF) as the methyl donor and reductant in the reaction, yielding dihydrofolate (DHF) as a by-product. This enzymatic reaction provides an intracellular de novo source of dTMP, an essential precursor for DNA biosynthesis. The polypeptide is Thymidylate synthase (Xanthomonas axonopodis pv. citri (strain 306)).